Consider the following 391-residue polypeptide: Phosphoglycerate kinase (391 aa).

Substrate contacts are provided by residues 21–23 (DLN), arginine 36, 59–62 (HLGR), arginine 113, and arginine 146. ATP contacts are provided by residues lysine 197, glutamate 319, and 345–348 (GGDT).

The protein belongs to the phosphoglycerate kinase family. Monomer.

It localises to the cytoplasm. The catalysed reaction is (2R)-3-phosphoglycerate + ATP = (2R)-3-phospho-glyceroyl phosphate + ADP. It participates in carbohydrate degradation; glycolysis; pyruvate from D-glyceraldehyde 3-phosphate: step 2/5. The polypeptide is Phosphoglycerate kinase (Shewanella sp. (strain ANA-3)).